The sequence spans 1497 residues: Polyunsaturated fatty acid synthase subunit C (1497 aa).

2 dehydratase (DH) domain regions span residues 271–422 (YKLC…DYGK) and 797–937 (QGQY…RVRI). A compositionally biased stretch (low complexity) spans 944 to 958 (ASSSASSVGSSASAE). The tract at residues 944-977 (ASSSASSVGSSASAEVAERTRSKAAPQPVASGPA) is disordered. Residues 1026–1470 (LGDLGDRSFM…ILRGACYLRR (445 aa)) form an enoylreductase (ER) domain region.

This sequence belongs to the thioester dehydratase family. FabA subfamily. As to quaternary structure, component of the polyunsaturated fatty acid synthase complex composed of at least ORF-A, ORF-B and ORF-C.

It participates in lipid metabolism; fatty acid biosynthesis. Its function is as follows. Polyketide synthase-like protein; part of the polyunsaturated fatty acid synthase composed of the 3 PKS-like subunits A, B and C. While the saturated fatty acids (SFAs) in Thraustochytrium are produced by the conventional fatty acid synthase (FAS) pathway, polyunsaturated fatty acids (PUFAs) including docosahexeanoic acid (DHA) and docosapentaenoic acid (DPA) are synthesized via an anaerobical PKS pathway. PUFA synthase assimilates fatty acyl-CoA, the product of FAS, as the starter unit to synthesize DPA, and this starter unit may be butyryl-CoA, hexanoyl-CoA, or octanoyl-CoA. DPA and DHA biosynthesis seem to differ by the reduction at the N-3 position by PUFA synthase, not the extension of carbon chain. In DHA biosynthesis, PUFA synthase extends the fatty acyl chain from the methyl toward the carboxyl end, and the double bond is formed when the carbon chain is growing, instead of afterward. Therefore, PUFA synthase is unable to transform DPA to DHA, suggesting that DPA is not the precursor of DHA. Moreover, DPA molecule is partly extended by FAS KS domain, so DPA biosynthesis is less dependent on PUFA synthase KS domain than DHA. The chain is Polyunsaturated fatty acid synthase subunit C from Thraustochytrium sp. (strain ATCC 26185 / S-3).